The sequence spans 281 residues: Pantothenate synthetase (281 aa).

26–33 serves as a coordination point for ATP; that stretch reads MGSLHEGH. His33 functions as the Proton donor in the catalytic mechanism. (R)-pantoate is bound at residue Gln57. Gln57 provides a ligand contact to beta-alanine. 144-147 contacts ATP; that stretch reads GKKD. Gln150 provides a ligand contact to (R)-pantoate. ATP is bound by residues Ala173 and 181-184; that span reads LSSR.

The protein belongs to the pantothenate synthetase family. In terms of assembly, homodimer.

The protein localises to the cytoplasm. The catalysed reaction is (R)-pantoate + beta-alanine + ATP = (R)-pantothenate + AMP + diphosphate + H(+). It functions in the pathway cofactor biosynthesis; (R)-pantothenate biosynthesis; (R)-pantothenate from (R)-pantoate and beta-alanine: step 1/1. Functionally, catalyzes the condensation of pantoate with beta-alanine in an ATP-dependent reaction via a pantoyl-adenylate intermediate. This is Pantothenate synthetase from Methylibium petroleiphilum (strain ATCC BAA-1232 / LMG 22953 / PM1).